The following is a 354-amino-acid chain: MLNKEIGSDKKEESFFRSAFQKLKRIERPEKDKQKVPRDRSKLIAVTLWSCVGSLLFICLLAVLLSINTRSQLNDMKDETNKPTNDDKQKISVTAAENFLSGFINEYMNVKNDQESIEKRMQSLESYMVKQEDNHFEDEERFNVDGLKGDRELKGYSLYNVKEGDKNSLFQYKVTYENLYPVEKEVEKEVKDGKKKKKVKEKVKTNEKYEKQMLLNIPVTNKGDSFAVSAVPYFTQIYDLKGDIAFKGKEETRDEYAGEKKESIESFLQNFFEKYASEKKEEMVYMMKKPEALEGNLLFGEVQSVKIFETKKGFEVFCAVRFKEKENDIPVNEKFSLEITENSGQFYVNKLKHQ.

A helical transmembrane segment spans residues 43–63; sequence LIAVTLWSCVGSLLFICLLAV.

The protein localises to the cell membrane. This is an uncharacterized protein from Bacillus subtilis (strain 168).